Here is a 299-residue protein sequence, read N- to C-terminus: MNEFDRVRDYLTDLQDRICAAVEAIDGKARFAEDLWQRAEGGGGRTRILRDGAVFEQAGIGFSDVSGARLPPSASAHRPELAGATWRACGVSLVFHPHNPHIPTTHANVRYFRAERDGEMVAAWFGGGFDLTPFYPVDEDVMHWHRTAQALCAPFGEERYAAHKRWCDEYFFLRHRNETRGVGGLFFDDLGQDFERDFAYQRAVGDGFLDAYLPIVERRKDTPYGEAERAFQLYRRGRYVEFNLVYDRGTLFGLQSGGRAESILMSLPPQVRWEYGFQPQPGSAEARLADYLIPRDWLG.

Ser-92 serves as a coordination point for substrate. A divalent metal cation contacts are provided by His-96 and His-106. The Proton donor role is filled by His-106. 108–110 lines the substrate pocket; sequence NVR. A divalent metal cation-binding residues include His-145 and His-175. Residues 239 to 274 form an important for dimerization region; that stretch reads YVEFNLVYDRGTLFGLQSGGRAESILMSLPPQVRWE. 257-259 is a substrate binding site; the sequence is GGR.

The protein belongs to the aerobic coproporphyrinogen-III oxidase family. As to quaternary structure, homodimer. Requires a divalent metal cation as cofactor.

It localises to the cytoplasm. It catalyses the reaction coproporphyrinogen III + O2 + 2 H(+) = protoporphyrinogen IX + 2 CO2 + 2 H2O. The protein operates within porphyrin-containing compound metabolism; protoporphyrin-IX biosynthesis; protoporphyrinogen-IX from coproporphyrinogen-III (O2 route): step 1/1. Involved in the heme biosynthesis. Catalyzes the aerobic oxidative decarboxylation of propionate groups of rings A and B of coproporphyrinogen-III to yield the vinyl groups in protoporphyrinogen-IX. This is Oxygen-dependent coproporphyrinogen-III oxidase from Xanthomonas campestris pv. campestris (strain 8004).